We begin with the raw amino-acid sequence, 569 residues long: Sulfite reductase [NADPH] hemoprotein beta-component (569 aa).

Positions 433, 439, 478, and 482 each coordinate [4Fe-4S] cluster. C482 is a binding site for siroheme.

Belongs to the nitrite and sulfite reductase 4Fe-4S domain family. Alpha(8)-beta(8). The alpha component is a flavoprotein, the beta component is a hemoprotein. It depends on siroheme as a cofactor. [4Fe-4S] cluster is required as a cofactor.

It carries out the reaction hydrogen sulfide + 3 NADP(+) + 3 H2O = sulfite + 3 NADPH + 4 H(+). It functions in the pathway sulfur metabolism; hydrogen sulfide biosynthesis; hydrogen sulfide from sulfite (NADPH route): step 1/1. Its function is as follows. Component of the sulfite reductase complex that catalyzes the 6-electron reduction of sulfite to sulfide. This is one of several activities required for the biosynthesis of L-cysteine from sulfate. The protein is Sulfite reductase [NADPH] hemoprotein beta-component of Pseudoalteromonas atlantica (strain T6c / ATCC BAA-1087).